Here is a 584-residue protein sequence, read N- to C-terminus: Interferon regulatory factor 2-binding protein 1 (584 aa).

The segment at 59 to 120 is disordered; it reads HVLPEGRSPG…RYDRATSSSR (62 aa). At serine 66 the chain carries Phosphoserine. Positions 82-100 are enriched in low complexity; it reads STGSQGSQLPPPQAQAQPS. Serine 125 is subject to Phosphoserine. Position 177 is an omega-N-methylarginine (arginine 177). The residue at position 186 (serine 186) is a Phosphoserine. Positions 197 to 217 form a coiled coil; it reads EKEKQQRNADCLAELNEAMRG. Residue lysine 227 forms a Glycyl lysine isopeptide (Lys-Gly) (interchain with G-Cter in SUMO2) linkage. Disordered regions lie at residues 346 to 421 and 433 to 495; these read PAEA…GVPS and LGHS…GTGA. Positions 354 to 369 are enriched in pro residues; sequence YPEPAPAALCGPPPRA. A phosphoserine mark is found at serine 371, serine 384, serine 421, and serine 436. Residue lysine 438 forms a Glycyl lysine isopeptide (Lys-Gly) (interchain with G-Cter in SUMO2) linkage. The segment covering 449-458 has biased composition (low complexity); that stretch reads AGGASPAASS. Residues serine 453 and serine 457 each carry the phosphoserine modification. Residues 503-550 form an RING-type; degenerate zinc finger; sequence CTLCRERLEDTHFVQCPSVPGHKFCFPCSREFIKAQGPAGEVYCPSGD. Residues 503-550 form a cys-rich region; the sequence is CTLCRERLEDTHFVQCPSVPGHKFCFPCSREFIKAQGPAGEVYCPSGD.

Belongs to the IRF2BP family. In terms of assembly, interacts with IRF2. Part of a corepressor complex containing IRF2 and IRF2BP2. Interacts with JDP2.

The protein resides in the nucleus. It carries out the reaction S-ubiquitinyl-[E2 ubiquitin-conjugating enzyme]-L-cysteine + [acceptor protein]-L-lysine = [E2 ubiquitin-conjugating enzyme]-L-cysteine + N(6)-ubiquitinyl-[acceptor protein]-L-lysine.. Its function is as follows. Acts as a transcriptional corepressor in a IRF2-dependent manner; this repression is not mediated by histone deacetylase activities. May act as an E3 ligase towards JDP2, enhancing its polyubiquitination. Represses ATF2-dependent transcriptional activation. The protein is Interferon regulatory factor 2-binding protein 1 (Irf2bp1) of Mus musculus (Mouse).